The chain runs to 161 residues: Probable metalloprotease HVO_1016 (161 aa).

The MPN domain maps to 10 to 131 (VGIAADALDF…WEAFDQSGEV (122 aa)). Glu31 functions as the Proton donor/acceptor in the catalytic mechanism. Residues His87, His89, and Asp100 each contribute to the Zn(2+) site. The JAMM motif signature appears at 87 to 100 (HSHPNGVLRPSDAD).

The protein belongs to the peptidase M67B family. Monomer and homodimer. It depends on Zn(2+) as a cofactor.

In terms of biological role, probable metalloprotease. Does not hydrolyze SAMP1- and SAMP2-protein conjugates, diglycine-AMC, Ub-AMC, hemoglobin, cytochrome c, carbonic anhydrase, creatinine phosphokinase, beta-amylase and bovine serum albumin. This is Probable metalloprotease HVO_1016 from Haloferax volcanii (strain ATCC 29605 / DSM 3757 / JCM 8879 / NBRC 14742 / NCIMB 2012 / VKM B-1768 / DS2) (Halobacterium volcanii).